We begin with the raw amino-acid sequence, 473 residues long: GTPase Der (473 aa).

EngA-type G domains lie at 3–167 (FTVA…GKDR) and 203–378 (LRVA…RVWN). GTP-binding positions include 9 to 16 (GRPNVGKS), 56 to 60 (DTAGL), 119 to 122 (NKSE), 209 to 216 (GRPNAGKS), 256 to 260 (DTAGM), and 321 to 324 (NKWD). The region spanning 379–463 (KRISTAKLNR…PIRIHFRSAE (85 aa)) is the KH-like domain.

It belongs to the TRAFAC class TrmE-Era-EngA-EngB-Septin-like GTPase superfamily. EngA (Der) GTPase family. Associates with the 50S ribosomal subunit.

Functionally, GTPase that plays an essential role in the late steps of ribosome biogenesis. The polypeptide is GTPase Der (Rhizobium leguminosarum bv. trifolii (strain WSM2304)).